The following is a 217-amino-acid chain: Large ribosomal subunit protein uL3 (217 aa).

The disordered stretch occupies residues 137 to 160 (VSASHGSHRNHRKPGSIGASSTPS).

The protein belongs to the universal ribosomal protein uL3 family. Part of the 50S ribosomal subunit. Forms a cluster with proteins L14 and L19.

Functionally, one of the primary rRNA binding proteins, it binds directly near the 3'-end of the 23S rRNA, where it nucleates assembly of the 50S subunit. The protein is Large ribosomal subunit protein uL3 of Clavibacter sepedonicus (Clavibacter michiganensis subsp. sepedonicus).